The following is a 408-amino-acid chain: LL-diaminopimelate aminotransferase (408 aa).

Substrate-binding residues include Tyr-15 and Gly-42. Pyridoxal 5'-phosphate-binding positions include Tyr-72, 108 to 109 (SK), Tyr-132, Asn-187, Tyr-218, and 246 to 248 (SFS). Substrate-binding residues include Lys-109, Tyr-132, and Asn-187. Lys-249 carries the post-translational modification N6-(pyridoxal phosphate)lysine. Residues Arg-257 and Asn-292 each coordinate pyridoxal 5'-phosphate. Substrate is bound by residues Asn-292 and Arg-388.

The protein belongs to the class-I pyridoxal-phosphate-dependent aminotransferase family. LL-diaminopimelate aminotransferase subfamily. As to quaternary structure, homodimer. Requires pyridoxal 5'-phosphate as cofactor.

The enzyme catalyses (2S,6S)-2,6-diaminopimelate + 2-oxoglutarate = (S)-2,3,4,5-tetrahydrodipicolinate + L-glutamate + H2O + H(+). The protein operates within amino-acid biosynthesis; L-lysine biosynthesis via DAP pathway; LL-2,6-diaminopimelate from (S)-tetrahydrodipicolinate (aminotransferase route): step 1/1. Functionally, involved in the synthesis of meso-diaminopimelate (m-DAP or DL-DAP), required for both lysine and peptidoglycan biosynthesis. Catalyzes the direct conversion of tetrahydrodipicolinate to LL-diaminopimelate. This is LL-diaminopimelate aminotransferase from Prochlorococcus marinus (strain MIT 9515).